A 485-amino-acid chain; its full sequence is N-succinylglutamate 5-semialdehyde dehydrogenase (485 aa).

220-225 (GSANTG) is a binding site for NAD(+). Active-site residues include Glu243 and Cys278.

It belongs to the aldehyde dehydrogenase family. AstD subfamily.

It carries out the reaction N-succinyl-L-glutamate 5-semialdehyde + NAD(+) + H2O = N-succinyl-L-glutamate + NADH + 2 H(+). It functions in the pathway amino-acid degradation; L-arginine degradation via AST pathway; L-glutamate and succinate from L-arginine: step 4/5. In terms of biological role, catalyzes the NAD-dependent reduction of succinylglutamate semialdehyde into succinylglutamate. The sequence is that of N-succinylglutamate 5-semialdehyde dehydrogenase from Vibrio campbellii (strain ATCC BAA-1116).